A 414-amino-acid chain; its full sequence is Phospholipid-transporting ATPase accessory subunit LEM3 (414 aa).

The interval 1–50 (MVNFDLGQVGEVFRRKDKGAIVSGDNPEEEEDVDASEFEEDEVKPVRTKN) is required for localization to the plasma membrane. Over 1–74 (MVNFDLGQVG…AINPVLTPRT (74 aa)) the chain is Cytoplasmic. The segment at 20-52 (AIVSGDNPEEEEDVDASEFEEDEVKPVRTKNRR) is disordered. The span at 26–42 (NPEEEEDVDASEFEEDE) shows a compositional bias: acidic residues. Residue Ser-36 is modified to Phosphoserine. The chain crosses the membrane as a helical span at residues 75 to 95 (VLPLYLLIAVVFVIVGGCILA). The Extracellular segment spans residues 96-372 (QNSKVDEVTI…HGSHLGGRNP (277 aa)). 2 disulfide bridges follow: Cys-110–Cys-159 and Cys-216–Cys-231. A glycan (N-linked (GlcNAc...) asparagine) is linked at Asn-113. Asn-240, Asn-256, Asn-279, Asn-298, and Asn-332 each carry an N-linked (GlcNAc...) asparagine glycan. The helical transmembrane segment at 373–393 (FLGIVYLIGGCICAAMALILL) threads the bilayer. The Cytoplasmic portion of the chain corresponds to 394-414 (TFWLFGGRKIADASSLSWNMK). Positions 400 to 414 (GRKIADASSLSWNMK) are required for localization to the plasma membrane.

It belongs to the CDC50/LEM3 family. As to quaternary structure, component of a flippase complex consisting of DNF1 or DNF2 and LEM3. Interacts with DNF1; the interaction is direct and required for their mutual export from the endoplasmic reticulum. Interacts with DNF2; the interaction is direct and required for their mutual export from the endoplasmic reticulum.

The protein resides in the cell membrane. In terms of biological role, accessory component of a P4-ATPase flippase complex which catalyzes the hydrolysis of ATP coupled to the transport of glucosylceramide, phosphatidylcholine, phosphatidylethanolamine, and small amounts of phosphatidylserine from the lumenal to the cytosolic leaflet of the cell membrane and ensures the maintenance of asymmetric distribution of phospholipids. Contributes to substrate binding and specificity of the P4-ATPase catalytic subunit. The polypeptide is Phospholipid-transporting ATPase accessory subunit LEM3 (Saccharomyces cerevisiae (strain ATCC 204508 / S288c) (Baker's yeast)).